Here is a 338-residue protein sequence, read N- to C-terminus: GTPase Obg (338 aa).

Residues 1 to 159 (MSFIDEVKIH…RWLRLELKLM (159 aa)) form the Obg domain. An OBG-type G domain is found at 160–331 (ADVGLLGMPS…LLDEIARQLW (172 aa)). Residues 166 to 173 (GMPSVGKS), 191 to 195 (FTTLK), 213 to 216 (DIPG), 283 to 286 (NKMD), and 312 to 314 (SAA) each bind GTP. Mg(2+) is bound by residues Ser-173 and Thr-193.

It belongs to the TRAFAC class OBG-HflX-like GTPase superfamily. OBG GTPase family. In terms of assembly, monomer. Requires Mg(2+) as cofactor.

The protein resides in the cytoplasm. In terms of biological role, an essential GTPase which binds GTP, GDP and possibly (p)ppGpp with moderate affinity, with high nucleotide exchange rates and a fairly low GTP hydrolysis rate. Plays a role in control of the cell cycle, stress response, ribosome biogenesis and in those bacteria that undergo differentiation, in morphogenesis control. The protein is GTPase Obg of Geotalea daltonii (strain DSM 22248 / JCM 15807 / FRC-32) (Geobacter daltonii).